Consider the following 239-residue polypeptide: Gag polyprotein (239 aa).

Residues 124–141 show a composition bias toward basic and acidic residues; that stretch reads KGEEVGETTAQRDAKMAP. Residues 124-144 are disordered; it reads KGEEVGETTAQRDAKMAPEKM. The short motif at 172–175 is the PPXY motif element; that stretch reads PPPY. A disordered region spans residues 184 to 214; it reads LAGVGEQQGQGGDTPWGAEQPRAEPGHAGLA.

The protein localises to the virion. The chain is Gag polyprotein (ev-1) from Galliformes.